We begin with the raw amino-acid sequence, 84 residues long: Peptide Ctry2346 (84 aa).

A signal peptide spans 1–23 (MKTQTLLFTFSLVLLMVATQTEA). Leucine 33 carries the leucine amide modification. The propeptide occupies 37–84 (GLLDNLLGKRGLLFGKRALTNQDLFDLAYDPSLSAADMDALEMLLENY).

This sequence belongs to the non-disulfide-bridged peptide (NDBP) superfamily. Short antimicrobial peptide (group 4) family. Expressed by the venom gland.

Its subcellular location is the secreted. It is found in the target cell membrane. In terms of biological role, antimicrobial peptide. This is Peptide Ctry2346 from Chaerilus tryznai (Scorpion).